Here is a 332-residue protein sequence, read N- to C-terminus: L-lactate dehydrogenase A chain (332 aa).

NAD(+)-binding positions include 29–57 and Arg99; that span reads GMVG…MEDK. Substrate-binding residues include Arg106, Asn138, and Arg169. An NAD(+)-binding site is contributed by Asn138. Residue His193 is the Proton acceptor of the active site. Thr248 provides a ligand contact to substrate.

It belongs to the LDH/MDH superfamily. LDH family. Homotetramer.

The protein localises to the cytoplasm. The enzyme catalyses (S)-lactate + NAD(+) = pyruvate + NADH + H(+). It functions in the pathway fermentation; pyruvate fermentation to lactate; (S)-lactate from pyruvate: step 1/1. Its function is as follows. Interconverts simultaneously and stereospecifically pyruvate and lactate with concomitant interconversion of NADH and NAD(+). This Rhinogobiops nicholsii (Blackeye goby) protein is L-lactate dehydrogenase A chain (ldha).